Here is a 172-residue protein sequence, read N- to C-terminus: C-phycocyanin beta subunit (172 aa).

Asn-72 is modified (N4-methylasparagine). Cys-82 and Cys-153 together coordinate (2R,3E)-phycocyanobilin.

The protein belongs to the phycobiliprotein family. Heterodimer of an alpha and a beta subunit, which further assembles into trimers and the trimers into hexamers. In terms of processing, contains two covalently linked bilin chromophores.

The protein localises to the cellular thylakoid membrane. Light-harvesting photosynthetic bile pigment-protein from the phycobiliprotein complex (phycobilisome, PBS). Phycocyanin is the major phycobiliprotein in the PBS rod. This chain is C-phycocyanin beta subunit (cpcB), found in Synechocystis sp. (strain PCC 6701).